Reading from the N-terminus, the 234-residue chain is Ribonuclease 3 (234 aa).

In terms of domain architecture, RNase III spans Tyr-13–Gly-136. Residue Glu-49 participates in Mg(2+) binding. Asp-53 is a catalytic residue. Mg(2+)-binding residues include Ser-122 and Glu-125. Glu-125 is an active-site residue. A DRBM domain is found at Asp-163 to Gly-232.

This sequence belongs to the ribonuclease III family. As to quaternary structure, homodimer. Mg(2+) serves as cofactor.

It is found in the cytoplasm. The enzyme catalyses Endonucleolytic cleavage to 5'-phosphomonoester.. Functionally, digests double-stranded RNA. Involved in the processing of primary rRNA transcript to yield the immediate precursors to the large and small rRNAs (23S and 16S). Processes some mRNAs, and tRNAs when they are encoded in the rRNA operon. Processes pre-crRNA and tracrRNA of type II CRISPR loci if present in the organism. The protein is Ribonuclease 3 of Helicobacter acinonychis (strain Sheeba).